The sequence spans 1067 residues: Carbamoyl phosphate synthase large chain (1067 aa).

The tract at residues 1–401 (MPLNKDIKKV…AFLKGIRSLE (401 aa)) is carboxyphosphate synthetic domain. ATP contacts are provided by Arg129, Arg169, Gly175, Gly176, Lys208, Val210, Glu215, Gly241, Ile242, His243, Gln284, and Glu298. Residues 133–327 (RDMMNRINQP…IAKVAAKIAL (195 aa)) enclose the ATP-grasp 1 domain. Gln284, Glu298, and Asn300 together coordinate Mg(2+). The Mn(2+) site is built by Gln284, Glu298, and Asn300. The interval 402–549 (IGKYSLEHKK…YSTYEQYDEV (148 aa)) is oligomerization domain. Residues 550–932 (VVSDNKKVVV…ALYKGFVGAS (383 aa)) form a carbamoyl phosphate synthetic domain region. The region spanning 674–864 (DDLLERLNIA…IVDIATRIML (191 aa)) is the ATP-grasp 2 domain. Positions 710, 749, 751, 755, 780, 781, 782, 783, 823, and 835 each coordinate ATP. Positions 823, 835, and 837 each coordinate Mg(2+). 3 residues coordinate Mn(2+): Gln823, Glu835, and Asn837. The MGS-like domain maps to 933 to 1067 (MYTGDKGKTI…NRELEVFNLI (135 aa)). The tract at residues 933–1067 (MYTGDKGKTI…NRELEVFNLI (135 aa)) is allosteric domain.

The protein belongs to the CarB family. In terms of assembly, composed of two chains; the small (or glutamine) chain promotes the hydrolysis of glutamine to ammonia, which is used by the large (or ammonia) chain to synthesize carbamoyl phosphate. Tetramer of heterodimers (alpha,beta)4. Mg(2+) is required as a cofactor. Requires Mn(2+) as cofactor.

The catalysed reaction is hydrogencarbonate + L-glutamine + 2 ATP + H2O = carbamoyl phosphate + L-glutamate + 2 ADP + phosphate + 2 H(+). It carries out the reaction hydrogencarbonate + NH4(+) + 2 ATP = carbamoyl phosphate + 2 ADP + phosphate + 2 H(+). The protein operates within amino-acid biosynthesis; L-arginine biosynthesis; carbamoyl phosphate from bicarbonate: step 1/1. It functions in the pathway pyrimidine metabolism; UMP biosynthesis via de novo pathway; (S)-dihydroorotate from bicarbonate: step 1/3. Its function is as follows. Large subunit of the glutamine-dependent carbamoyl phosphate synthetase (CPSase). CPSase catalyzes the formation of carbamoyl phosphate from the ammonia moiety of glutamine, carbonate, and phosphate donated by ATP, constituting the first step of 2 biosynthetic pathways, one leading to arginine and/or urea and the other to pyrimidine nucleotides. The large subunit (synthetase) binds the substrates ammonia (free or transferred from glutamine from the small subunit), hydrogencarbonate and ATP and carries out an ATP-coupled ligase reaction, activating hydrogencarbonate by forming carboxy phosphate which reacts with ammonia to form carbamoyl phosphate. This chain is Carbamoyl phosphate synthase large chain, found in Clostridium perfringens (strain SM101 / Type A).